The primary structure comprises 652 residues: Epithelial sodium channel subunit gamma (652 aa).

Residues 1–54 are Cytoplasmic-facing; sequence MAPGEKIKAKIKKNLPVTGPQAPNIKELMQWYCLNTNTHGCRRIVVSRGRLRRL. Residues 55–75 form a helical membrane-spanning segment; that stretch reads LWILFTLTAVALIFWQCALLI. Residues 76 to 537 are Extracellular-facing; that stretch reads SSFYTVSVSI…EQLLSNIGGQ (462 aa). 8 disulfide bridges follow: C100–C286, C210–C217, C263–C270, C375–C460, C397–C456, C401–C452, C410–C437, and C412–C426. A gating release of inhibition by proteolysis (GRIP); protease-sensitive region that is responsible for the proteolytic activation of the channel region spans residues 137–224; that stretch reads RKRREAQSWS…SDCAVYTFSS (88 aa). A glycan (N-linked (GlcNAc...) asparagine) is linked at N212. N-linked (GlcNAc...) asparagine glycosylation is present at N500. Residues 538–558 traverse the membrane as a helical segment; it reads LGLWMSCSVVCVIEIIEVFFI. The Cytoplasmic segment spans residues 559 to 652; the sequence is DSLSIIARHQ…LTDTQTTFPH (94 aa). The interval 610-631 is disordered; it reads SALSLPPAPGSQVPGTPPPRYN. The PY motif; recruits WW domain-containing proteins and is thereby required for ubiquitination and inhibition of the channel by NEDD4 and NEDD4L motif lies at 626 to 630; that stretch reads PPPRY.

Belongs to the amiloride-sensitive sodium channel (TC 1.A.6) family. SCNN1G subfamily. As to quaternary structure, component of the heterotrimeric epithelial sodium channel (ENaC) composed of an alpha/SCNN1A, a beta/SCNN1B and a gamma/SCNN1G subunit. An additional delta/SCNN1D subunit can replace the alpha/SCNN1A subunit to form an alternative channel with specific properties. Interacts with WWP1 (via WW domains). Interacts with WWP2 (via WW domains); inhibits the channel. Interacts with the full-length immature form of PCSK9 (pro-PCSK9); inhibits ENaC by promoting its proteasomal degradation. Interacts with BPIFA1; the interaction is indirect via SCNN1B and inhibits the proteolytic maturation of SCNN1A and SCNN1G and the activation of ENaC. Phosphorylated on serine and threonine residues. Aldosterone and insulin increase the basal level of phosphorylation. Post-translationally, ubiquitinated. Can be ubiquitinated at multiple sites and undergo monoubiquitination and polyubiquitination. Ubiquitination by NEDD4 or NEDD4L inhibits the ENaC channel through endocytosis, intracellular retention and degradation of its individual subunits. In terms of processing, ENaC is activated through the proteolytic maturation of its subunits. Furin cleaves the SCNN1G subunit first, followed by cleavage by prostasin (PRSS8), which results in a stepwise increase in the open probability of the channel due to the release of an inhibitory tract. BPIFA1, which is recruited by the SCNN1B subunit, prevents the proteolytic activation of ENaC. N-glycosylated. N-linked glycans are processed to complex type during ENaC complex assembly and transport to the plasma membrane.

The protein localises to the apical cell membrane. The enzyme catalyses Na(+)(in) = Na(+)(out). Originally identified and characterized by its inhibition by the diuretic drug amiloride. In terms of biological role, this is one of the three pore-forming subunits of the heterotrimeric epithelial sodium channel (ENaC), a critical regulator of sodium balance and fluid homeostasis. ENaC operates in epithelial tissues, where it mediates the electrodiffusion of sodium ions from extracellular fluid through the apical membrane of cells, with water following osmotically. It plays a key role in maintaining sodium homeostasis through electrogenic sodium reabsorption in the kidneys. Additionally, ENaC is essential for airway surface liquid homeostasis, which is crucial for proper mucus clearance. This Bos taurus (Bovine) protein is Epithelial sodium channel subunit gamma.